Consider the following 324-residue polypeptide: Probable UDP-sugar transporter protein SLC35A4 (324 aa).

At 1–18 (MSVEDGGVPGLARPRQAR) the chain is on the cytoplasmic side. A helical transmembrane segment spans residues 19–39 (WTLLLFLSTAMYGAHAPFLAL). Residues 40–52 (CHVDGRVPFRPSS) are Lumenal-facing. The helical transmembrane segment at 53 to 73 (AVLLTELTKLLLCAFSLLVGW) threads the bilayer. Over 74–85 (QTWPQGTPPWRQ) the chain is Cytoplasmic. Residues 86-106 (AVPFALSALLYGANNNLVIYL) traverse the membrane as a helical segment. At 107–142 (QRYMDPSTYQVLSNLKIGSTALLYCLCLGHRLSARQ) the chain is on the lumenal side. The helical transmembrane segment at 143–163 (GLALLLLMAAGACYASGGFQE) threads the bilayer. At 164–180 (PVNTLPGPASAAGAHPM) the chain is on the cytoplasmic side. The helical transmembrane segment at 181 to 201 (PLHITPLGLLLLILYCLISGL) threads the bilayer. Residues 202–214 (SSVYTELIMKRQR) are Lumenal-facing. The chain crosses the membrane as a helical span at residues 215 to 235 (LPLALQNLFLYTFGVILNFGL). Residues 236–248 (YAGSGPGPGFLEG) are Cytoplasmic-facing. The chain crosses the membrane as a helical span at residues 249 to 271 (FSGWAVLVVLNQAVNGLLMSAVM). Residues 272-279 (KHGSSITR) lie on the Lumenal side of the membrane. A helical membrane pass occupies residues 280–300 (LFIVSCSLVVNAVLSAVLLQL). Residues 301-324 (QLTAIFFLAALLIGLAVCLYYGSP) lie on the Cytoplasmic side of the membrane.

Belongs to the nucleotide-sugar transporter family. SLC35A subfamily. In terms of assembly, found in a complex with SLC35A2 and SLC35A3.

It localises to the golgi apparatus membrane. The catalysed reaction is CDP-L-ribitol(in) + CDP(out) = CDP-L-ribitol(out) + CDP(in). Functionally, mediates the transport of CDP-ribitol. Does not exhibit CMP-sialic acid, UDP-galactose and UDP-N-acetylglucosamine transport activity. This Mus musculus (Mouse) protein is Probable UDP-sugar transporter protein SLC35A4.